The primary structure comprises 345 residues: Protein Tob1 (345 aa).

Positions 22–39 match the Bipartite nuclear localization signal motif; the sequence is RRRVNIFGEELERLLKKK. The important for nuclear localization stretch occupies residues 82–92; sequence VRGNLPQDLSV. The span at 144–160 shows a compositional bias: low complexity; that stretch reads DPASSVSSSPSPPFGHS. The tract at residues 144-171 is disordered; it reads DPASSVSSSPSPPFGHSAAVSPTFMPRS. Positions 161 to 218 are required for interaction with CPEB3; the sequence is AAVSPTFMPRSTQPLTFTTATFAATKFGSTKMKNSGRSNKVARTSPINLGLNVNDLLK. Phosphothreonine is present on Thr204. A Nuclear export signal motif is present at residues 226–234; sequence MHSLYGLGL. A disordered region spans residues 231–267; the sequence is GLGLGSQQQPQQQQQPAQPPPPPPPPQQQQQQKTSAL. Over residues 237 to 246 the composition is skewed to low complexity; it reads QQQPQQQQQP. Residues 247–257 are compositionally biased toward pro residues; that stretch reads AQPPPPPPPPQ.

The protein belongs to the BTG family. Interacts with ERBB2. Interacts with CNOT7. Interacts with CPEB3 (via C-terminal RNA-binding region); recruits CNOT7 to CPEB3 to form a ternary complex required for mRNA deadenylation and decay. Interacts with CNOT8. Interacts with CPEB4. In terms of processing, phosphorylated on Ser and Thr residues. Ubiquitous.

The protein localises to the cytoplasm. The protein resides in the nucleus. Functionally, anti-proliferative protein; the function is mediated by association with deadenylase subunits of the CCR4-NOT complex. Mediates CPEB3-accelerated mRNA deadenylation by binding to CPEB3 and recruiting CNOT7 which leads to target mRNA deadenylation and decay. The polypeptide is Protein Tob1 (TOB1) (Homo sapiens (Human)).